The primary structure comprises 387 residues: Omega-6 fatty acid desaturase, endoplasmic reticulum isozyme 1 (387 aa).

2 consecutive transmembrane segments (helical) span residues 54-74 (LLTS…FYIA) and 87-107 (LIAW…VWVI). The short motif at 109–113 (HECGH) is the Histidine box-1 element. The chain crosses the membrane as a helical span at residues 121 to 141 (WVDDVVGLTLHSTLLVPYFSW). The short motif at 145–149 (HRRHH) is the Histidine box-2 element. Helical transmembrane passes span 183–203 (AVSL…FNVS), 227–247 (LLIY…YRVA), and 251–271 (GLVW…GFLV). The short motif at 319–323 (HVAHH) is the Histidine box-3 element.

The protein belongs to the fatty acid desaturase type 1 family. As to expression, strongly expressed in developing seeds.

Its subcellular location is the endoplasmic reticulum membrane. It functions in the pathway lipid metabolism; polyunsaturated fatty acid biosynthesis. Functionally, ER (microsomal) omega-6 fatty acid desaturase introduces the second double bond in the biosynthesis of 18:3 fatty acids, important constituents of plant membranes. It is thought to use cytochrome b5 as an electron donor and to act on fatty acids esterified to phosphatidylcholine and, possibly, other phospholipids. This is Omega-6 fatty acid desaturase, endoplasmic reticulum isozyme 1 (FAD2-1) from Glycine max (Soybean).